Here is a 228-residue protein sequence, read N- to C-terminus: 2-C-methyl-D-erythritol 4-phosphate cytidylyltransferase (228 aa).

It belongs to the IspD/TarI cytidylyltransferase family. IspD subfamily.

The enzyme catalyses 2-C-methyl-D-erythritol 4-phosphate + CTP + H(+) = 4-CDP-2-C-methyl-D-erythritol + diphosphate. The protein operates within isoprenoid biosynthesis; isopentenyl diphosphate biosynthesis via DXP pathway; isopentenyl diphosphate from 1-deoxy-D-xylulose 5-phosphate: step 2/6. In terms of biological role, catalyzes the formation of 4-diphosphocytidyl-2-C-methyl-D-erythritol from CTP and 2-C-methyl-D-erythritol 4-phosphate (MEP). The polypeptide is 2-C-methyl-D-erythritol 4-phosphate cytidylyltransferase (Crocosphaera subtropica (strain ATCC 51142 / BH68) (Cyanothece sp. (strain ATCC 51142))).